The primary structure comprises 78 residues: RNA-binding protein Hfq (78 aa).

In terms of domain architecture, Sm spans 10–69 (DPFLNALRKEHVPVSIYLVNGIKLQGNIESFDQYVVLLRNTVTQMVYKHAISTVVPARPV).

Belongs to the Hfq family. As to quaternary structure, homohexamer.

In terms of biological role, RNA chaperone that binds small regulatory RNA (sRNAs) and mRNAs to facilitate mRNA translational regulation in response to envelope stress, environmental stress and changes in metabolite concentrations. Also binds with high specificity to tRNAs. The polypeptide is RNA-binding protein Hfq (Paraburkholderia phytofirmans (strain DSM 17436 / LMG 22146 / PsJN) (Burkholderia phytofirmans)).